Consider the following 107-residue polypeptide: Putative double-stranded DNA mimic protein NTHI1680 (107 aa).

It belongs to the putative dsDNA mimic protein family.

In terms of biological role, may act as a double-stranded DNA (dsDNA) mimic. Probably regulates the activity of a dsDNA-binding protein. The polypeptide is Putative double-stranded DNA mimic protein NTHI1680 (Haemophilus influenzae (strain 86-028NP)).